Consider the following 206-residue polypeptide: Large ribosomal subunit protein uL3 (206 aa).

Belongs to the universal ribosomal protein uL3 family. Part of the 50S ribosomal subunit. Forms a cluster with proteins L14 and L19.

In terms of biological role, one of the primary rRNA binding proteins, it binds directly near the 3'-end of the 23S rRNA, where it nucleates assembly of the 50S subunit. The polypeptide is Large ribosomal subunit protein uL3 (Thermus thermophilus (strain ATCC BAA-163 / DSM 7039 / HB27)).